Consider the following 51-residue polypeptide: Kunitz-like toxin PcKuz3 (51 aa).

Cystine bridges form between Cys1-Cys51, Cys10-Cys34, and Cys26-Cys47.

It belongs to the venom Kunitz-type family. Sea anemone type 2 potassium channel toxin subfamily.

It localises to the secreted. The protein localises to the nematocyst. Functionally, potent toxin and weak serine protease inhibitor that displays activity on both trypsin and elastase. May act as a neurotoxin by blocking voltage-gated potassium channels (Kv1.1/KCNA1 and Kv1.2/KCNA2). Has a neuroprotective effect, since it suppress, at low concentration, the 6-hydroxydopamine-induced neurotoxicity on the locomotive behavior of zebrafish. In vivo, has strong reversible antilocomotor activity. In addition, it is lethal to zebrafish larvae at high doses. The chain is Kunitz-like toxin PcKuz3 from Palythoa caribaeorum (White encrusting zoanthid coral).